The primary structure comprises 648 residues: Transmembrane 9 superfamily member 8 (648 aa).

The first 33 residues, 1–33 (MAMEFLRSSRRILESSGCAIALIFLLFIHGAHS), serve as a signal peptide directing secretion. Residues 34 to 285 (FYLPGVAPQD…YLLMSDNQIH (252 aa)) are Lumenal-facing. A helical membrane pass occupies residues 286–306 (WFSIVNSLMIVLFLSGMVAMI). At 307 to 355 (MLRTLYRDISRYNELETQEEAQEETGWKLVHGDVFRLPTNSDLLCVYVG) the chain is on the cytoplasmic side. The chain crosses the membrane as a helical span at residues 356 to 376 (TGVQCLGMVFVTMIFAMLGFL). Residues 377 to 381 (SPSNR) are Lumenal-facing. A helical transmembrane segment spans residues 382 to 402 (GGLMTAMLLLWVFMGLFAGYA). Over 403 to 422 (SSRLYKMFKGTEWKRIAFRT) the chain is Cytoplasmic. Residues 423-443 (AFLFPAVVSAIFFVLNALIWG) form a helical membrane-spanning segment. At 444–455 (QKSSGAVPFGTM) the chain is on the lumenal side. A helical membrane pass occupies residues 456–476 (FALIFLWFGISVPLVFVGGYI). Residues 477–506 (GFKKPAADDPVKTNKIPRQIPEQAWYMNPV) are Cytoplasmic-facing. A helical transmembrane segment spans residues 507–527 (FSILIGGILPFGAVFIELFFI). Residues 528–538 (LTSIWLNQFYY) are Lumenal-facing. The chain crosses the membrane as a helical span at residues 539 to 559 (IFGFLFLVFVILIVTCAEITV). The Cytoplasmic portion of the chain corresponds to 560–577 (VLCYFQLCSEDYLWWWRS). The helical transmembrane segment at 578-598 (YLTSGSSALYLFLYATFYFFT) threads the bilayer. Residues 599 to 604 (KLQITK) lie on the Lumenal side of the membrane. The helical transmembrane segment at 605-625 (LVSAMLYFGYMLIASYAFFVL) threads the bilayer. At 626–648 (TGTIGFYACLWFTRLIYSSVKID) the chain is on the cytoplasmic side. Residues 637–642 (FTRLIY) carry the Endoplasmic reticulum export signal motif. The short motif at 646–648 (KID) is the Golgi retention signal element.

The protein belongs to the nonaspanin (TM9SF) (TC 9.A.2) family.

It localises to the endosome membrane. The protein resides in the golgi apparatus membrane. The chain is Transmembrane 9 superfamily member 8 from Arabidopsis thaliana (Mouse-ear cress).